The chain runs to 370 residues: Cytochrome b (370 aa).

4 consecutive transmembrane segments (helical) span residues 25–45, 69–90, 105–125, and 170–190; these read FGSMLLTCMALQTSTGFFLAI, WIMQNLHAIGASLFFICIYTHI, WLSGTILLIILMATAFFGYVL, and FFALHFILPFLIISLSSIHIV. Heme b-binding residues include His-75 and His-89. Residues His-174 and His-188 each coordinate heme b. His-193 is a binding site for a ubiquinone. The next 4 helical transmembrane spans lie at 218 to 238, 280 to 300, 312 to 332, and 339 to 358; these read YKDMLMATTMITMLFITMSFM, LGGTLALLMSVIILTAPPFTH, LTQILFWMLIATFITITWTAT, and FITISQMASTXYFLFFIINP.

Belongs to the cytochrome b family. The cytochrome bc1 complex contains 3 respiratory subunits (MT-CYB, CYC1 and UQCRFS1), 2 core proteins (UQCRC1 and UQCRC2) and probably 6 low-molecular weight proteins. It depends on heme b as a cofactor.

It localises to the mitochondrion inner membrane. Component of the ubiquinol-cytochrome c reductase complex (complex III or cytochrome b-c1 complex) that is part of the mitochondrial respiratory chain. The b-c1 complex mediates electron transfer from ubiquinol to cytochrome c. Contributes to the generation of a proton gradient across the mitochondrial membrane that is then used for ATP synthesis. This Micropechis ikaheca (New Guinean small-eyed snake) protein is Cytochrome b (MT-CYB).